Reading from the N-terminus, the 267-residue chain is Myb-related protein Hv1 (267 aa).

2 consecutive HTH myb-type domains span residues 9–61 and 62–116; these read KAHT…INYL and RPDL…RRKL. 2 consecutive DNA-binding regions (H-T-H motif) follow at residues 37 to 61 and 89 to 112; these read WRSL…INYL and WSLI…NTHI.

Germinating seed and apical meristem of shoot and root.

It localises to the nucleus. Its function is as follows. Possible transcription activator in response to an external signal. May be involved in the regulation of flavonoid biosynthesis. The polypeptide is Myb-related protein Hv1 (MYB1) (Hordeum vulgare (Barley)).